Reading from the N-terminus, the 329-residue chain is Synaptonemal complex central element protein 1 (329 aa).

The segment at 1–33 is disordered; it reads MATRPQPLSVEPEGSADLLHGPEGARGRRGSTQ. Coiled-coil stretches lie at residues 28 to 168 and 194 to 294; these read RRGS…ETLM and KEQL…ILAQ. A disordered region spans residues 295–329; sequence IQSTQKEEDSSWRTASPKPLEAHKETVQERPSSRT. The span at 314-329 shows a compositional bias: basic and acidic residues; the sequence is LEAHKETVQERPSSRT.

Belongs to the SYCE family. Homodimer. Found in a complex with SYCP1 and SYCE2. Interacts with SYCP1, SYCE2 and SYCE3. Interacts with SIX6OS1.

Its subcellular location is the nucleus. It localises to the chromosome. In terms of biological role, major component of the transverse central element of synaptonemal complexes (SCS), formed between homologous chromosomes during meiotic prophase. Requires SYCP1 in order to be incorporated into the central element. May have a role in the synaptonemal complex assembly, stabilization and recombination. This Rattus norvegicus (Rat) protein is Synaptonemal complex central element protein 1 (Syce1).